A 633-amino-acid chain; its full sequence is Threonine--tRNA ligase (633 aa).

Residues 1–143 (MRALFLHSNR…SRTIKPKKVK (143 aa)) form an editing domain region. Catalytic regions lie at residues 220–515 (NPLN…PVLP) and 221–515 (PLND…PVLP). Zn(2+)-binding residues include cysteine 314, histidine 365, and histidine 488.

Belongs to the class-II aminoacyl-tRNA synthetase family. As to quaternary structure, homodimer. It depends on Zn(2+) as a cofactor.

The protein resides in the cytoplasm. It carries out the reaction tRNA(Thr) + L-threonine + ATP = L-threonyl-tRNA(Thr) + AMP + diphosphate + H(+). Catalyzes the attachment of threonine to tRNA(Thr) in a two-step reaction: L-threonine is first activated by ATP to form Thr-AMP and then transferred to the acceptor end of tRNA(Thr). Also edits incorrectly charged L-seryl-tRNA(Thr). This Nanoarchaeum equitans (strain Kin4-M) protein is Threonine--tRNA ligase.